We begin with the raw amino-acid sequence, 154 residues long: Nuclear cap-binding protein subunit 2 (154 aa).

MRNA-binding positions include tyrosine 10, tyrosine 33, 102–106, 113–117, and 123–124; these read RVDWD, RQYGR, and QV. The region spanning 30 to 108 is the RRM domain; sequence CTLYVGNLSF…RLIRVDWDAG (79 aa).

The protein belongs to the RRM NCBP2 family. In terms of assembly, component of the nuclear cap-binding complex (CBC), a heterodimer composed of Cbp80 and Cbp20 that interacts with m7GpppG-capped RNA. Interacts with Ars2.

Its subcellular location is the nucleus. Component of the cap-binding complex (CBC), which binds co-transcriptionally to the 5' cap of pre-mRNAs and is involved in various processes such as pre-mRNA splicing and RNA-mediated gene silencing (RNAi). The CBC complex is involved in miRNA-mediated RNA interference via its interaction with Ars2 and is required for primary microRNAs (miRNAs) processing. Also involved in innate immunity via the short interfering RNAs (siRNAs) processing machinery by restricting the viral RNA production. In the CBC complex, Cbp20 recognizes and binds capped RNAs (m7GpppG-capped RNA) but requires Cbp80 to stabilize the movement of its N-terminal loop and lock the CBC into a high affinity cap-binding state with the cap structure. The polypeptide is Nuclear cap-binding protein subunit 2 (Cbp20) (Drosophila erecta (Fruit fly)).